A 260-amino-acid chain; its full sequence is HTH-type transcriptional repressor NanR (260 aa).

Residues Lys-27–Pro-95 form the HTH gntR-type domain. Residues Glu-55–Ala-74 constitute a DNA-binding region (H-T-H motif).

The protein belongs to the NanR family.

Transcriptional repressor that controls expression of the genes required for the catabolism of sialic acids. The polypeptide is HTH-type transcriptional repressor NanR (Citrobacter rodentium (strain ICC168) (Citrobacter freundii biotype 4280)).